A 288-amino-acid polypeptide reads, in one-letter code: 33 kDa chaperonin (288 aa).

Cystine bridges form between Cys236-Cys238 and Cys269-Cys272.

This sequence belongs to the HSP33 family. In terms of processing, under oxidizing conditions two disulfide bonds are formed involving the reactive cysteines. Under reducing conditions zinc is bound to the reactive cysteines and the protein is inactive.

The protein resides in the cytoplasm. Its function is as follows. Redox regulated molecular chaperone. Protects both thermally unfolding and oxidatively damaged proteins from irreversible aggregation. Plays an important role in the bacterial defense system toward oxidative stress. The sequence is that of 33 kDa chaperonin from Lactococcus lactis subsp. cremoris (strain SK11).